A 441-amino-acid polypeptide reads, in one-letter code: Arginine biosynthesis bifunctional protein ArgJ, mitochondrial (441 aa).

Positions 177, 204, 215, 301, 436, and 441 each coordinate substrate. Residue Thr215 is the Nucleophile of the active site.

Belongs to the ArgJ family. In terms of assembly, heterodimer of an alpha and a beta chain. Post-translationally, the alpha and beta chains are autoproteolytically processed from a single precursor protein within the mitochondrion.

It is found in the mitochondrion matrix. The catalysed reaction is N(2)-acetyl-L-ornithine + L-glutamate = N-acetyl-L-glutamate + L-ornithine. The enzyme catalyses L-glutamate + acetyl-CoA = N-acetyl-L-glutamate + CoA + H(+). The protein operates within amino-acid biosynthesis; L-arginine biosynthesis; L-ornithine and N-acetyl-L-glutamate from L-glutamate and N(2)-acetyl-L-ornithine (cyclic): step 1/1. Its pathway is amino-acid biosynthesis; L-arginine biosynthesis; N(2)-acetyl-L-ornithine from L-glutamate: step 1/4. Its function is as follows. Catalyzes two activities which are involved in the cyclic version of arginine biosynthesis: the synthesis of acetylglutamate from glutamate and acetyl-CoA, and of ornithine by transacetylation between acetylornithine and glutamate. In Lachancea thermotolerans (strain ATCC 56472 / CBS 6340 / NRRL Y-8284) (Yeast), this protein is Arginine biosynthesis bifunctional protein ArgJ, mitochondrial.